The following is a 226-amino-acid chain: NADH-quinone oxidoreductase subunit B 2 (226 aa).

Cysteine 37, cysteine 38, cysteine 103, and cysteine 132 together coordinate [4Fe-4S] cluster.

It belongs to the complex I 20 kDa subunit family. As to quaternary structure, NDH-1 is composed of 14 different subunits. Subunits NuoB, C, D, E, F, and G constitute the peripheral sector of the complex. It depends on [4Fe-4S] cluster as a cofactor.

It is found in the cell membrane. It catalyses the reaction a quinone + NADH + 5 H(+)(in) = a quinol + NAD(+) + 4 H(+)(out). NDH-1 shuttles electrons from NADH, via FMN and iron-sulfur (Fe-S) centers, to quinones in the respiratory chain. The immediate electron acceptor for the enzyme in this species is believed to be a menaquinone. Couples the redox reaction to proton translocation (for every two electrons transferred, four hydrogen ions are translocated across the cytoplasmic membrane), and thus conserves the redox energy in a proton gradient. The polypeptide is NADH-quinone oxidoreductase subunit B 2 (Salinispora arenicola (strain CNS-205)).